The chain runs to 365 residues: Isopentenyl-diphosphate delta-isomerase (365 aa).

Residue 8 to 9 participates in substrate binding; it reads RK. FMN-binding positions include 67–69, Ser-97, and Asn-126; that span reads SIT. Residue 97–99 coordinates substrate; sequence SQR. Gln-160 is a binding site for substrate. Glu-161 lines the Mg(2+) pocket. FMN is bound by residues Lys-192, Thr-222, 272–274, and 293–294; these read GVR and AL.

Belongs to the IPP isomerase type 2 family. In terms of assembly, homooctamer. Dimer of tetramers. Requires FMN as cofactor. NADPH serves as cofactor. It depends on Mg(2+) as a cofactor.

Its subcellular location is the cytoplasm. The enzyme catalyses isopentenyl diphosphate = dimethylallyl diphosphate. Functionally, involved in the biosynthesis of isoprenoids. Catalyzes the 1,3-allylic rearrangement of the homoallylic substrate isopentenyl (IPP) to its allylic isomer, dimethylallyl diphosphate (DMAPP). This chain is Isopentenyl-diphosphate delta-isomerase, found in Methanosarcina acetivorans (strain ATCC 35395 / DSM 2834 / JCM 12185 / C2A).